The primary structure comprises 538 residues: Cytochrome P450 monooxygenase okaG (538 aa).

Residues 3–23 (LISPLAAVLSAMAIVLGLLFF) form a helical membrane-spanning segment. Cys-484 is a binding site for heme.

The protein belongs to the cytochrome P450 family. Requires heme as cofactor.

It is found in the membrane. The enzyme catalyses 12-deshydroxyl okaramine E + 2 reduced [NADPH--hemoprotein reductase] + 2 O2 = 3-desmethyl okaramine B + 2 oxidized [NADPH--hemoprotein reductase] + 2 H2O + 2 H(+). It functions in the pathway alkaloid biosynthesis. Its function is as follows. Nonribosomal peptide synthetase; part of the gene cluster that mediates the biosynthesis of okaramine B, a prenylated indole alkaloid that possesses an unusual octacyclic ring system, including a four-membered azetidine ring and an eight-membered azocine ring, and that exhibits insecticidal activity against silkworm larvae. Within the pathway, okaG acts as a 2,3-diol synthase that installs 2,3-diol on the okaramine scaffold to convert 12-deshydroxyl okaramine E into 3-desmethyl okaramine B. OkaG is also able to produce use okaramine E and produce okaramine D with the help of the methyltransferase okaF. The biosynthesis begins with the NRPS okaA that condenses two tryptophan molecules into cyclo(L-Trp-L-Trp). Prenylation by the prenyltransferase okaC then leads to the formation of cyclo(N8-(alpha,alpha-dimethylallyl)-L-Trp-6a-(alpha,alpha-dime-thylallyl)-L-Trp). This is followed by indole 2,3-epoxidation by the FAD-dependent monooxygenase okaB to facilitate the formation of the hexahydropyrrolo[2,3-b]indole (HPI) moiety of okaramine C. The cytochrome P450 monooxygenase okaD then likely catalyzes formation of the eight-membered ring of okaramine A. The dioxygenase okaE further forms the unusual 2-dimethyl-3-methyl-azetidine ring to yield 12-deshydroxyl okaramine E, as well as the hydroxylation of 12-deshydroxyl okaramine E to produce okaramine E. The cytochrome P450 monoxygenase okaG converts 12-deshydroxyl okaramine E into 3-desmethyl okaramine B which is further methylated by the methyltransferase okaF into okaramine B. In a shunt pathway, okaG and okaF together are also able to convert okaramine E into okaramine D. Okaramine H is produced by nonenzymatic conversion from okaramine A. The polypeptide is Cytochrome P450 monooxygenase okaG (Penicillium ochrochloron).